The following is a 63-amino-acid chain: LTCVTGKSIGGISTEECAAGQKICNKKWTKMGPKLYDVSRGCTATCPKADEYGCVKCCNTDRN.

Cystine bridges form between cysteine 3-cysteine 24, cysteine 17-cysteine 42, and cysteine 46-cysteine 57.

Belongs to the three-finger toxin family. Short-chain subfamily. Aminergic toxin sub-subfamily. Heterodimer of C9S3 chain 1 (AC P01408) and chain 2, linked by at least two disulfide bonds. In terms of tissue distribution, expressed by the venom gland.

It localises to the secreted. Its function is as follows. This protein shows a synergetic toxic effect in that it enhances the toxicity of other D.angusticeps toxins. In Dendroaspis angusticeps (Eastern green mamba), this protein is Synergistic-type venom protein C9S3, chain 2.